Reading from the N-terminus, the 436-residue chain is Protein TIC 40, chloroplastic (436 aa).

The N-terminal 39 residues, 1–39 (MENLNLALVSSPKPLLLGHSSSKNVFSGRKSFTFGTFRV), are a transit peptide targeting the chloroplast. The transit peptide at 40 to 72 (SANSSSSHVTRAASKSHQNLKSVQGKVNAHDFA) directs the protein to the chloroplast; inner membrane. Over 73-98 (SISSSNGQETTSVGVSPQLSPPPPST) the chain is Chloroplast intermembrane. Residues 74–90 (ISSSNGQETTSVGVSPQ) are compositionally biased toward polar residues. The segment at 74–95 (ISSSNGQETTSVGVSPQLSPPP) is disordered. A helical membrane pass occupies residues 99 to 119 (VGSPLFWIGIGVGFSALFSVV). Residues 120–436 (ASRVKKYAMQ…ELFPGVSGPP (317 aa)) lie on the Stromal side of the membrane. 2 disordered regions span residues 160 to 191 (PMPS…QSTV) and 245 to 285 (DVDE…RKSA). Residues 177 to 191 (QSQATSTRSASQSTV) are compositionally biased toward low complexity. Over residues 245–257 (DVDESSSFKEARA) the composition is skewed to basic and acidic residues. STI1 domains follow at residues 297-331 (DPTV…RQQL) and 373-412 (PQEV…IVKY).

Part of the Tic complex. Interacts with HSP93, TIC110, TIC62 and TOC75.

It localises to the plastid. It is found in the chloroplast inner membrane. Its function is as follows. Involved in protein precursor import into chloroplasts. Part of the motor complex consisting of a co-chaperone (TIC40) and a chaperone (HSP93) associated with the import channel (TIC110). Causes the release of bound transit peptides from TIC110 and stimulates ATP hydrolysis by HSP93. Involved in reinsertion of proteins from the chloroplast stroma into the inner membrane. This Pisum sativum (Garden pea) protein is Protein TIC 40, chloroplastic (TIC40).